A 227-amino-acid polypeptide reads, in one-letter code: Large ribosomal subunit protein uL1 (227 aa).

It belongs to the universal ribosomal protein uL1 family. Part of the 50S ribosomal subunit.

In terms of biological role, binds directly to 23S rRNA. The L1 stalk is quite mobile in the ribosome, and is involved in E site tRNA release. Its function is as follows. Protein L1 is also a translational repressor protein, it controls the translation of the L11 operon by binding to its mRNA. In Tropheryma whipplei (strain TW08/27) (Whipple's bacillus), this protein is Large ribosomal subunit protein uL1.